The sequence spans 456 residues: Crinkler effector protein 2 (456 aa).

The N-terminal stretch at 1–17 (MVKLVCAIVGVAGSAFP) is a signal peptide. Residues 18 to 54 (VDTDASQLVGDLKKAIKAENAMTFTGDAKDLQLFLAK) are LQLFLAK domain. Residues 55–136 (QPVDDESGKE…NMELPSSEQI (82 aa)) are DWL domain. The short motif at 137–143 (HVLVVVP) is the HVLVXXP motif element. Residue N338 is glycosylated (N-linked (GlcNAc...) asparagine).

This sequence belongs to the Crinkler effector family.

It localises to the secreted. Its subcellular location is the host nucleus. Secreted effector that effector that induces cell death when expressed in host plants. Induces the expression of defense response genes in tomato. This Phytophthora infestans (Potato late blight agent) protein is Crinkler effector protein 2.